The chain runs to 318 residues: 3'-5' exoribonuclease YhaM (318 aa).

The HD domain occupies 163 to 279 (HVVSMLDLAK…LHYIDNLDAK (117 aa)).

The protein belongs to the YhaM family.

Functionally, shows a 3'-5' exoribonuclease activity. This Bacillus cytotoxicus (strain DSM 22905 / CIP 110041 / 391-98 / NVH 391-98) protein is 3'-5' exoribonuclease YhaM.